A 363-amino-acid chain; its full sequence is Mitogen-activated protein kinase kinase 2 (363 aa).

Ser-56 bears the Phosphoserine mark. A Protein kinase domain is found at 70-330; sequence LDMVKVIGKG…AKELMEHPFL (261 aa). ATP-binding positions include 76-84 and Lys-99; that span reads IGKGSSGVV. Asp-192 acts as the Proton acceptor in catalysis. A phosphothreonine mark is found at Thr-220, Thr-226, and Thr-230.

It belongs to the protein kinase superfamily. STE Ser/Thr protein kinase family. MAP kinase kinase subfamily. As to quaternary structure, interacts with MEKK1, MPK4 and MPK6. May form a ternary complex composed of MEKK1 and MKK1/MKK2 and MPK4. Interacts with MPK10 and MPK11. Interacts with MAPKKK5 mainly in the cytosol. In terms of processing, phosphorylation at Thr-220 and Thr-226 by MAP kinase kinase kinases positively regulates kinase activity. Phosphorylated by MEKK1 in response to cold. Phosphorylated by MAPKKK5.

The enzyme catalyses L-seryl-[protein] + ATP = O-phospho-L-seryl-[protein] + ADP + H(+). It carries out the reaction L-threonyl-[protein] + ATP = O-phospho-L-threonyl-[protein] + ADP + H(+). The catalysed reaction is L-tyrosyl-[protein] + ATP = O-phospho-L-tyrosyl-[protein] + ADP + H(+). Its activity is regulated as follows. Activated in response to cold and salt stresses through serine and threonine phosphorylation by MEKK1. Its function is as follows. MEKK1, MKK1/MKK2 and MPK4 function in a signaling pathway that modulates the expression of genes responding to biotic and abiotic stresses and also plays an important role in pathogen defense by negatively regulating innate immunity. Plays a role in abiotic stress tolerance and plant disease resistance through activation of MPK4 and MPK6 by phosphorylation. Acts redundantly with MKK1. The chain is Mitogen-activated protein kinase kinase 2 (MKK2) from Arabidopsis thaliana (Mouse-ear cress).